A 349-amino-acid polypeptide reads, in one-letter code: 4-hydroxythreonine-4-phosphate dehydrogenase (349 aa).

Threonine 135 contacts substrate. Residues histidine 170, histidine 215, and histidine 276 each contribute to the a divalent metal cation site. Substrate-binding residues include lysine 284, asparagine 293, and arginine 302.

It belongs to the PdxA family. Homodimer. A divalent metal cation is required as a cofactor.

The protein localises to the cytoplasm. It carries out the reaction 4-(phosphooxy)-L-threonine + NAD(+) = 3-amino-2-oxopropyl phosphate + CO2 + NADH. It participates in cofactor biosynthesis; pyridoxine 5'-phosphate biosynthesis; pyridoxine 5'-phosphate from D-erythrose 4-phosphate: step 4/5. In terms of biological role, catalyzes the NAD(P)-dependent oxidation of 4-(phosphooxy)-L-threonine (HTP) into 2-amino-3-oxo-4-(phosphooxy)butyric acid which spontaneously decarboxylates to form 3-amino-2-oxopropyl phosphate (AHAP). The sequence is that of 4-hydroxythreonine-4-phosphate dehydrogenase from Synechococcus sp. (strain JA-3-3Ab) (Cyanobacteria bacterium Yellowstone A-Prime).